Here is a 312-residue protein sequence, read N- to C-terminus: Isochorismatase (312 aa).

Residues 229–302 (VFTCENIRKQ…EWQKLLTTRS (74 aa)) form the Carrier domain. Ser263 is modified (O-(pantetheine 4'-phosphoryl)serine).

It belongs to the isochorismatase family.

It catalyses the reaction isochorismate + H2O = (2S,3S)-2,3-dihydroxy-2,3-dihydrobenzoate + pyruvate. It participates in siderophore biosynthesis; bacillibactin biosynthesis. The sequence is that of Isochorismatase (dhbB) from Bacillus subtilis (strain 168).